A 212-amino-acid polypeptide reads, in one-letter code: Adenine phosphoribosyltransferase (212 aa).

It belongs to the purine/pyrimidine phosphoribosyltransferase family. Homodimer.

The protein localises to the cytoplasm. It catalyses the reaction AMP + diphosphate = 5-phospho-alpha-D-ribose 1-diphosphate + adenine. It participates in purine metabolism; AMP biosynthesis via salvage pathway; AMP from adenine: step 1/1. Functionally, catalyzes a salvage reaction resulting in the formation of AMP, that is energically less costly than de novo synthesis. The chain is Adenine phosphoribosyltransferase from Mycobacterium tuberculosis (strain CDC 1551 / Oshkosh).